A 290-amino-acid polypeptide reads, in one-letter code: MDKIIKSIAQSGAFRAYVLDSTETVALAQEKHNTLSSSTVALGRTLIANQILAANQKGDSKITVKVIGDSSFGHIISVADTKGHVKGYIQNTGVDIKKTETGEVLVGPFMGNGHFVTIIDYGTGNPYTSTTPLITGEIGEDFAYYLTESEQTPSAIGLNVLLDENDKVKVAGGFMVQVLPEASEEEIARYEKRLQEMPAISHLLASKNHVDALLEAIYGDEPYKRLSEEPLSFQCDCSRERFEAALMTLPKADLQAMIDEDKGAEIVCQFCGTKYQFNESDLEAIISDKA.

2 disulfide bridges follow: C235-C237 and C268-C271.

This sequence belongs to the HSP33 family. In terms of processing, under oxidizing conditions two disulfide bonds are formed involving the reactive cysteines. Under reducing conditions zinc is bound to the reactive cysteines and the protein is inactive.

The protein resides in the cytoplasm. Its function is as follows. Redox regulated molecular chaperone. Protects both thermally unfolding and oxidatively damaged proteins from irreversible aggregation. Plays an important role in the bacterial defense system toward oxidative stress. This chain is 33 kDa chaperonin, found in Streptococcus pyogenes serotype M49.